Here is a 241-residue protein sequence, read N- to C-terminus: Probable transcriptional regulatory protein Rmet_0785 (241 aa).

The protein belongs to the TACO1 family.

Its subcellular location is the cytoplasm. The protein is Probable transcriptional regulatory protein Rmet_0785 of Cupriavidus metallidurans (strain ATCC 43123 / DSM 2839 / NBRC 102507 / CH34) (Ralstonia metallidurans).